A 456-amino-acid chain; its full sequence is Amino acid transporter AVT6B (456 aa).

11 helical membrane passes run 37–57 (FSGA…MALP), 58–78 (ATMK…MAFL), 118–138 (ILVS…DVLA), 164–184 (TFVL…FKRI), 191–211 (SAIS…ITII), 236–256 (LFTV…VHSI), 273–293 (ALAM…LLFG), 328–348 (LMLV…GLIF), 365–385 (SITA…PSIW), 388–408 (FQFT…AAVI), and 423–443 (IAIC…YSDA).

It belongs to the amino acid/polyamine transporter 2 family. Amino acid/auxin permease (AAAP) (TC 2.A.18.6) subfamily.

It is found in the membrane. The polypeptide is Amino acid transporter AVT6B (Arabidopsis thaliana (Mouse-ear cress)).